We begin with the raw amino-acid sequence, 246 residues long: O-antigen export system ATP-binding protein RfbB (246 aa).

The ABC transporter domain occupies 22–246 (SGIKDLVFHP…IIELYKQAMA (225 aa)). 63-70 (GRNGAGKS) provides a ligand contact to ATP.

Belongs to the ABC transporter superfamily.

Its subcellular location is the cell inner membrane. In terms of biological role, may form an ATP-driven O-antigen export apparatus, in association with RfbA. This Klebsiella pneumoniae protein is O-antigen export system ATP-binding protein RfbB (rfbB).